The primary structure comprises 298 residues: Lipoyl synthase (298 aa).

7 residues coordinate [4Fe-4S] cluster: C40, C45, C51, C67, C71, C74, and S280. The 217-residue stretch at 53–269 folds into the Radical SAM core domain; sequence AVRKTATFMI…KEIALSKGFS (217 aa).

Belongs to the radical SAM superfamily. Lipoyl synthase family. It depends on [4Fe-4S] cluster as a cofactor.

It is found in the cytoplasm. The catalysed reaction is [[Fe-S] cluster scaffold protein carrying a second [4Fe-4S](2+) cluster] + N(6)-octanoyl-L-lysyl-[protein] + 2 oxidized [2Fe-2S]-[ferredoxin] + 2 S-adenosyl-L-methionine + 4 H(+) = [[Fe-S] cluster scaffold protein] + N(6)-[(R)-dihydrolipoyl]-L-lysyl-[protein] + 4 Fe(3+) + 2 hydrogen sulfide + 2 5'-deoxyadenosine + 2 L-methionine + 2 reduced [2Fe-2S]-[ferredoxin]. It functions in the pathway protein modification; protein lipoylation via endogenous pathway; protein N(6)-(lipoyl)lysine from octanoyl-[acyl-carrier-protein]. Its function is as follows. Catalyzes the radical-mediated insertion of two sulfur atoms into the C-6 and C-8 positions of the octanoyl moiety bound to the lipoyl domains of lipoate-dependent enzymes, thereby converting the octanoylated domains into lipoylated derivatives. The chain is Lipoyl synthase from Bacillus anthracis (strain A0248).